The primary structure comprises 175 residues: Ribosome maturation factor RimM (175 aa).

The 80-residue stretch at 96–175 folds into the PRC barrel domain; that stretch reads EGDYYWHDLI…TIEVDWDAGF (80 aa).

It belongs to the RimM family. Binds ribosomal protein uS19.

The protein resides in the cytoplasm. Its function is as follows. An accessory protein needed during the final step in the assembly of 30S ribosomal subunit, possibly for assembly of the head region. Essential for efficient processing of 16S rRNA. May be needed both before and after RbfA during the maturation of 16S rRNA. It has affinity for free ribosomal 30S subunits but not for 70S ribosomes. This chain is Ribosome maturation factor RimM, found in Actinobacillus succinogenes (strain ATCC 55618 / DSM 22257 / CCUG 43843 / 130Z).